We begin with the raw amino-acid sequence, 250 residues long: Probable dihydroorotate dehydrogenase B (NAD(+)), electron transfer subunit (250 aa).

An FAD-binding FR-type domain is found at 1-89 (MINLKIEENV…RGPYGNGFDV (89 aa)). Cysteine 200, cysteine 205, cysteine 208, and cysteine 216 together coordinate [2Fe-2S] cluster.

It belongs to the PyrK family. As to quaternary structure, heterotetramer of 2 PyrK and 2 PyrD type B subunits. The cofactor is [2Fe-2S] cluster. FAD is required as a cofactor.

The protein operates within pyrimidine metabolism; UMP biosynthesis via de novo pathway; orotate from (S)-dihydroorotate (NAD(+) route): step 1/1. Responsible for channeling the electrons from the oxidation of dihydroorotate from the FMN redox center in the PyrD type B subunit to the ultimate electron acceptor NAD(+). This chain is Probable dihydroorotate dehydrogenase B (NAD(+)), electron transfer subunit, found in Thermoplasma volcanium (strain ATCC 51530 / DSM 4299 / JCM 9571 / NBRC 15438 / GSS1).